The following is an 86-amino-acid chain: MKNLIAELLFKLAQKEEESKELCAQVEALEIIVTAMLRNMAQNDQQRLIDQVEGALYEVKPDASIPDDDTELLRDYVKKLLRHPRQ.

Positions 1–36 form a coiled coil; it reads MKNLIAELLFKLAQKEEESKELCAQVEALEIIVTAM.

The protein belongs to the IraP family. Interacts with RssB.

The protein localises to the cytoplasm. Its function is as follows. Inhibits RpoS proteolysis by regulating RssB activity, thereby increasing the stability of the sigma stress factor RpoS especially during phosphate starvation, but also in stationary phase and during nitrogen starvation. Its effect on RpoS stability is due to its interaction with RssB, which probably blocks the interaction of RssB with RpoS, and the consequent delivery of the RssB-RpoS complex to the ClpXP protein degradation pathway. The chain is Anti-adapter protein IraP from Escherichia coli O127:H6 (strain E2348/69 / EPEC).